A 68-amino-acid polypeptide reads, in one-letter code: Large ribosomal subunit protein uL30 (68 aa).

Residues 1–26 (MSAKKSASKATVTVQQIGSPLRREPS) form a disordered region. Polar residues predominate over residues 8-18 (SKATVTVQQIG).

This sequence belongs to the universal ribosomal protein uL30 family. In terms of assembly, part of the 50S ribosomal subunit.

The polypeptide is Large ribosomal subunit protein uL30 (Parvibaculum lavamentivorans (strain DS-1 / DSM 13023 / NCIMB 13966)).